A 484-amino-acid polypeptide reads, in one-letter code: Glutamate--tRNA ligase (484 aa).

The 'HIGH' region signature appears at 11 to 21 (PSPTGYLHIGN). The short motif at 252-256 (KLSKR) is the 'KMSKS' region element. ATP is bound at residue lysine 255.

Belongs to the class-I aminoacyl-tRNA synthetase family. Glutamate--tRNA ligase type 1 subfamily. In terms of assembly, monomer.

It localises to the cytoplasm. The catalysed reaction is tRNA(Glu) + L-glutamate + ATP = L-glutamyl-tRNA(Glu) + AMP + diphosphate. Its function is as follows. Catalyzes the attachment of glutamate to tRNA(Glu) in a two-step reaction: glutamate is first activated by ATP to form Glu-AMP and then transferred to the acceptor end of tRNA(Glu). This is Glutamate--tRNA ligase from Staphylococcus aureus (strain MRSA252).